The chain runs to 181 residues: Cell division protein ZapC (181 aa).

Belongs to the ZapC family. As to quaternary structure, interacts directly with FtsZ.

It localises to the cytoplasm. Contributes to the efficiency of the cell division process by stabilizing the polymeric form of the cell division protein FtsZ. Acts by promoting interactions between FtsZ protofilaments and suppressing the GTPase activity of FtsZ. This chain is Cell division protein ZapC, found in Shewanella woodyi (strain ATCC 51908 / MS32).